We begin with the raw amino-acid sequence, 888 residues long: ETO1-like protein 1 (888 aa).

The BTB domain occupies 180-280 (KNVVFKIGEE…ACDRELASLI (101 aa)). 5 TPR repeats span residues 381-414 (VLGF…GHVY), 441-477 (SSVS…DPTL), 511-544 (LECL…CPDY), 637-670 (HERL…KRSF), and 711-744 (GQAL…RHTR). Residues 755-793 (LRNDKAAAYEEMTRLIEKAQNNASAYEKRSEYCDRELAK) adopt a coiled-coil conformation. TPR repeat units follow at residues 807–840 (VYPY…KADL) and 842–873 (LLHL…DPNH).

The protein belongs to the ETO1 family. Interacts with the C-terminal domain of ACS4, ACS5 and ACS9. Predominantly expressed in flowers.

It functions in the pathway protein modification; protein ubiquitination. Its function is as follows. Possible regulator of the ethylene pathway, which acts by regulating the stability of 1-aminocyclopropane-1-carboxylate synthase (ACS) enzymes. May act as a substrate-specific adapter that connects ACS enzymes, such as ACS5, to ubiquitin ligase complexes, leading to proteasomal degradation of ACS enzymes. The sequence is that of ETO1-like protein 1 (EOL1) from Arabidopsis thaliana (Mouse-ear cress).